The primary structure comprises 1147 residues: ATP-dependent helicase/deoxyribonuclease subunit B (1147 aa).

ATP is bound at residue 8–15; the sequence is GGSGAGKS. [4Fe-4S] cluster is bound by residues cysteine 780, cysteine 1092, cysteine 1095, and cysteine 1101.

This sequence belongs to the helicase family. AddB/RexB type 1 subfamily. As to quaternary structure, heterodimer of AddA and AddB. The cofactor is Mg(2+). Requires [4Fe-4S] cluster as cofactor.

Its function is as follows. The heterodimer acts as both an ATP-dependent DNA helicase and an ATP-dependent, dual-direction single-stranded exonuclease. Recognizes the chi site generating a DNA molecule suitable for the initiation of homologous recombination. The AddB subunit has 5' -&gt; 3' nuclease activity but not helicase activity. The polypeptide is ATP-dependent helicase/deoxyribonuclease subunit B (Lachnoclostridium phytofermentans (strain ATCC 700394 / DSM 18823 / ISDg) (Clostridium phytofermentans)).